The chain runs to 252 residues: Imidazole glycerol phosphate synthase subunit HisF (252 aa).

Catalysis depends on residues D12 and D131.

It belongs to the HisA/HisF family. Heterodimer of HisH and HisF.

The protein localises to the cytoplasm. It catalyses the reaction 5-[(5-phospho-1-deoxy-D-ribulos-1-ylimino)methylamino]-1-(5-phospho-beta-D-ribosyl)imidazole-4-carboxamide + L-glutamine = D-erythro-1-(imidazol-4-yl)glycerol 3-phosphate + 5-amino-1-(5-phospho-beta-D-ribosyl)imidazole-4-carboxamide + L-glutamate + H(+). It participates in amino-acid biosynthesis; L-histidine biosynthesis; L-histidine from 5-phospho-alpha-D-ribose 1-diphosphate: step 5/9. Its function is as follows. IGPS catalyzes the conversion of PRFAR and glutamine to IGP, AICAR and glutamate. The HisF subunit catalyzes the cyclization activity that produces IGP and AICAR from PRFAR using the ammonia provided by the HisH subunit. This chain is Imidazole glycerol phosphate synthase subunit HisF, found in Thermus thermophilus (strain ATCC BAA-163 / DSM 7039 / HB27).